The primary structure comprises 154 residues: 6,7-dimethyl-8-ribityllumazine synthase (154 aa).

5-amino-6-(D-ribitylamino)uracil-binding positions include phenylalanine 23, 57–59, and 81–83; these read AFE and AII. 86-87 contributes to the (2S)-2-hydroxy-3-oxobutyl phosphate binding site; the sequence is ST. The active-site Proton donor is histidine 89. Phenylalanine 114 provides a ligand contact to 5-amino-6-(D-ribitylamino)uracil. Arginine 128 serves as a coordination point for (2S)-2-hydroxy-3-oxobutyl phosphate.

Belongs to the DMRL synthase family.

The catalysed reaction is (2S)-2-hydroxy-3-oxobutyl phosphate + 5-amino-6-(D-ribitylamino)uracil = 6,7-dimethyl-8-(1-D-ribityl)lumazine + phosphate + 2 H2O + H(+). Its pathway is cofactor biosynthesis; riboflavin biosynthesis; riboflavin from 2-hydroxy-3-oxobutyl phosphate and 5-amino-6-(D-ribitylamino)uracil: step 1/2. Functionally, catalyzes the formation of 6,7-dimethyl-8-ribityllumazine by condensation of 5-amino-6-(D-ribitylamino)uracil with 3,4-dihydroxy-2-butanone 4-phosphate. This is the penultimate step in the biosynthesis of riboflavin. The sequence is that of 6,7-dimethyl-8-ribityllumazine synthase from Nitratiruptor sp. (strain SB155-2).